The following is a 238-amino-acid chain: Probable transcriptional regulatory protein VV2_1184 (238 aa).

It belongs to the TACO1 family.

The protein resides in the cytoplasm. The polypeptide is Probable transcriptional regulatory protein VV2_1184 (Vibrio vulnificus (strain CMCP6)).